An 86-amino-acid chain; its full sequence is Evasin-3 (86 aa).

The signal sequence occupies residues 1-20 (MRALLARLLLCVLVVSDSKG). 3 disulfides stabilise this stretch: Cys-42/Cys-57, Cys-46/Cys-59, and Cys-53/Cys-70. Asn-45 carries N-linked (GlcNAc...) asparagine glycosylation. N-linked (GlcNAc...) asparagine glycosylation occurs at Asn-76.

Monomer.

Its subcellular location is the secreted. Its function is as follows. Salivary chemokine-binding protein which shows chemokine neutralizing activity and binds to host chemokines CXCL1, CXCL2, CXCL3, CXCL5, CXCL6 and CXCL8. Binds to CXCL8 with 1:1 stoichiometry. Disrupts CXCL8 homodimer formation, disrupts the glycosaminoglycan-binding site of CXCL8 and inhibits the interaction of CXCL8 with CXCR2. This is Evasin-3 from Rhipicephalus sanguineus (Brown dog tick).